The following is a 33-amino-acid chain: Nigrocin-1 (33 aa).

Cys27 and Cys33 are joined by a disulfide.

Belongs to the frog skin active peptide (FSAP) family. Brevinin subfamily. As to expression, expressed by the skin dorsal glands.

The protein resides in the secreted. Its function is as follows. Shows antibacterial activity against both Gram-positive and Gram-negative bacteria and against the fungus C.albicans. Has no hemolytic activity. The polypeptide is Nigrocin-1 (Pelophylax nigromaculatus (Black-spotted frog)).